The following is a 784-amino-acid chain: Toll-like receptor 2 (784 aa).

An N-terminal signal peptide occupies residues 1–20; it reads MPRALWTAWVWAXIILSTEG. The Extracellular portion of the chain corresponds to 21 to 587; it reads ASDQASSLSC…ARLSLSECHR (567 aa). Cys-30 and Cys-36 are oxidised to a cystine. 19 LRR repeats span residues 54–77, 78–101, 102–125, 126–150, 151–175, 176–199, 200–223, 224–250, 251–278, 279–308, 309–337, 338–361, 362–388, 389–414, 415–437, 438–457, 458–478, 479–500, and 501–524; these read VKSLDLSNNEITYVGNRDLQRCVN, LKTLRLGANEIHTVEEDSFFHLRN, LEYLDLSYNRLSNLSSSWFRSLYV, LKFLNLLGNLYKTLGETSLFSHLPN, LXTLKVGNSNSFTEIHEKDFTGLTF, LEELEISAQNLQIYVPKSLKSIQN, ISHLILHLKQPVLLVDILVDIVSS, LDCLELRDTNLHTFHFSEASISEMSTS, VKKLIFRNVQFTDESFVEVVKLFNYVSG, ILEVEFDDCTHDGIGDFRALSLDRIRHLGN, VETLTIRKLHIPQFFLFHDLSSIYPLTGK, VKRVTIENSKVFLVPCLLSQHLKS, LEYLDLSENLMSEETLKNSACKDAWPF, LQTLVLRQNRLKSLEKTGELLLTLEN, LNSLDISKNNFLSMPETCQWPGK, MKQLNLSSTRIHSLTQCLPQ, TLEILDVSNNNLDSFSLILPQ, LKELYISRNKLKTLPDASFLPV, and LSVMRISRNIINTFSKEQLDSFQQ. Asn-114 carries N-linked (GlcNAc...) asparagine glycosylation. Asn-199 carries an N-linked (GlcNAc...) asparagine glycan. Cys-353 and Cys-382 are disulfide-bonded. The cysteines at positions 432 and 454 are disulfide-linked. N-linked (GlcNAc...) asparagine glycosylation is present at Asn-442. The LRRCT domain maps to 525-579; the sequence is LKTLEAGGNNFICSCDFLSFTQGQQALGRVLVDWPDDYRCDSPSHVRGQRVQDAR. A helical membrane pass occupies residues 588–608; that stretch reads AAVVSAACCALFLVLLLTGVL. Residues 609 to 784 lie on the Cytoplasmic side of the membrane; it reads CHRFHGLWYM…WLNLRAAIRS (176 aa). Residues 639–782 form the TIR domain; the sequence is ICYDAFVSYS…GFWLNLRAAI (144 aa). Residue Lys-754 forms a Glycyl lysine isopeptide (Lys-Gly) (interchain with G-Cter in ubiquitin) linkage. Residues 761 to 778 carry the ATG16L1-binding motif motif; sequence YLEWPVDETQQEGFWLNL.

It belongs to the Toll-like receptor family. Interacts with LY96, TLR1 and TLR6 (via extracellular domain). TLR2 seems to exist in heterodimers with either TLR1 or TLR6 before stimulation by the ligand. The heterodimers form bigger oligomers in response to their corresponding ligands as well as further heterotypic associations with other receptors such as CD14 and/or CD36. Binds MYD88 (via TIR domain). Interacts with TICAM1. Interacts with CNPY3. Interacts with ATG16L1. Interacts with PPP1R11. Interacts with TICAM2. Interacts with TIRAP. In terms of processing, ubiquitinated at Lys-754 by PPP1R11, leading to its degradation. Deubiquitinated by USP2. Post-translationally, glycosylation of Asn-442 is critical for secretion of the N-terminal ectodomain of TLR2.

It is found in the membrane. The protein resides in the cytoplasmic vesicle. Its subcellular location is the phagosome membrane. The protein localises to the membrane raft. Cooperates with LY96 to mediate the innate immune response to bacterial lipoproteins and other microbial cell wall components. Cooperates with TLR1 or TLR6 to mediate the innate immune response to bacterial lipoproteins or lipopeptides. Acts via MYD88 and TRAF6, leading to NF-kappa-B activation, cytokine secretion and the inflammatory response. May also promote apoptosis in response to lipoproteins. Forms activation clusters composed of several receptors depending on the ligand, these clusters trigger signaling from the cell surface and subsequently are targeted to the Golgi in a lipid-raft dependent pathway. Forms the cluster TLR2:TLR6:CD14:CD36 in response to diacylated lipopeptides and TLR2:TLR1:CD14 in response to triacylated lipopeptides. The protein is Toll-like receptor 2 (TLR2) of Bison bison (American bison).